The chain runs to 585 residues: Potassium-transporting ATPase potassium-binding subunit (585 aa).

Helical transmembrane passes span 23-43 (GVII…ILSF), 85-105 (FINL…VIMF), 152-172 (FVIT…SMAF), 194-214 (IFDL…LAGI), 275-295 (VEFV…GIVF), 307-327 (VVMF…FAGV), 345-365 (AIGI…STGA), 367-387 (NAAL…GLLL), 397-417 (GVLN…LMVG), 444-464 (LLVV…SSFV), 502-522 (LDGV…LIIA), and 547-567 (VLLI…IIVL).

The protein belongs to the KdpA family. As to quaternary structure, the system is composed of three essential subunits: KdpA, KdpB and KdpC.

Its subcellular location is the cell membrane. Part of the high-affinity ATP-driven potassium transport (or Kdp) system, which catalyzes the hydrolysis of ATP coupled with the electrogenic transport of potassium into the cytoplasm. This subunit binds the extracellular potassium ions and delivers the ions to the membrane domain of KdpB through an intramembrane tunnel. The polypeptide is Potassium-transporting ATPase potassium-binding subunit (Thermoplasma acidophilum (strain ATCC 25905 / DSM 1728 / JCM 9062 / NBRC 15155 / AMRC-C165)).